Reading from the N-terminus, the 143-residue chain is Deoxyuridine 5'-triphosphate nucleotidohydrolase (143 aa).

Residues 62 to 64 (RSG), asparagine 75, 79 to 81 (TID), and lysine 89 each bind substrate.

The protein belongs to the dUTPase family. The cofactor is Mg(2+).

The enzyme catalyses dUTP + H2O = dUMP + diphosphate + H(+). It functions in the pathway pyrimidine metabolism; dUMP biosynthesis; dUMP from dCTP (dUTP route): step 2/2. In terms of biological role, this enzyme is involved in nucleotide metabolism: it produces dUMP, the immediate precursor of thymidine nucleotides and it decreases the intracellular concentration of dUTP so that uracil cannot be incorporated into DNA. The sequence is that of Deoxyuridine 5'-triphosphate nucleotidohydrolase from Clostridium kluyveri (strain ATCC 8527 / DSM 555 / NBRC 12016 / NCIMB 10680 / K1).